The following is a 458-amino-acid chain: tRNA-2-methylthio-N(6)-dimethylallyladenosine synthase (458 aa).

Residues 15 to 134 (KKVFIKTYGC…LPELLEKAKQ (120 aa)) form the MTTase N-terminal domain. Positions 24, 60, 97, 175, 179, and 182 each coordinate [4Fe-4S] cluster. Residues 161–395 (RKRGVSAFLT…LLLEQQNTFL (235 aa)) form the Radical SAM core domain. The TRAM domain occupies 396 to 457 (RSKIGQKTDV…SNSFVGEMTN (62 aa)).

Belongs to the methylthiotransferase family. MiaB subfamily. In terms of assembly, monomer. [4Fe-4S] cluster is required as a cofactor.

It localises to the cytoplasm. It carries out the reaction N(6)-dimethylallyladenosine(37) in tRNA + (sulfur carrier)-SH + AH2 + 2 S-adenosyl-L-methionine = 2-methylsulfanyl-N(6)-dimethylallyladenosine(37) in tRNA + (sulfur carrier)-H + 5'-deoxyadenosine + L-methionine + A + S-adenosyl-L-homocysteine + 2 H(+). Catalyzes the methylthiolation of N6-(dimethylallyl)adenosine (i(6)A), leading to the formation of 2-methylthio-N6-(dimethylallyl)adenosine (ms(2)i(6)A) at position 37 in tRNAs that read codons beginning with uridine. This chain is tRNA-2-methylthio-N(6)-dimethylallyladenosine synthase, found in Bartonella tribocorum (strain CIP 105476 / IBS 506).